The sequence spans 1038 residues: Isoleucine--tRNA ligase (1038 aa).

A 'HIGH' region motif is present at residues 47-57 (PFATGLPHYGH). The 'KMSKS' region motif lies at 591–595 (KMSKR). Lysine 594 contacts ATP.

The protein belongs to the class-I aminoacyl-tRNA synthetase family. IleS type 2 subfamily. In terms of assembly, monomer. Requires Zn(2+) as cofactor.

It is found in the cytoplasm. It catalyses the reaction tRNA(Ile) + L-isoleucine + ATP = L-isoleucyl-tRNA(Ile) + AMP + diphosphate. In terms of biological role, catalyzes the attachment of isoleucine to tRNA(Ile). As IleRS can inadvertently accommodate and process structurally similar amino acids such as valine, to avoid such errors it has two additional distinct tRNA(Ile)-dependent editing activities. One activity is designated as 'pretransfer' editing and involves the hydrolysis of activated Val-AMP. The other activity is designated 'posttransfer' editing and involves deacylation of mischarged Val-tRNA(Ile). The chain is Isoleucine--tRNA ligase from Protochlamydia amoebophila (strain UWE25).